Consider the following 362-residue polypeptide: Cap-specific mRNA (nucleoside-2'-O-)-methyltransferase 1 (362 aa).

The RrmJ-type SAM-dependent 2'-O-MTase domain maps to 87–294; the sequence is SFGNRAGHKL…ERYLVCLGFL (208 aa). Residues Gly-130 and Asp-207 each coordinate S-adenosyl-L-methionine. The active-site Proton acceptor is Lys-248.

It localises to the nucleus. The enzyme catalyses a 5'-end (N(7)-methyl 5'-triphosphoguanosine)-ribonucleoside in mRNA + S-adenosyl-L-methionine = a 5'-end (N(7)-methyl 5'-triphosphoguanosine)-(2'-O-methyl-ribonucleoside) in mRNA + S-adenosyl-L-homocysteine + H(+). Its function is as follows. S-adenosyl-L-methionine-dependent methyltransferase that mediates RNA cap1 2'-O-ribose methylation to the 5'-cap structure of spliced leader and U1 small nuclear RNAs. Methylates the ribose of the first nucleotide of a m(7)GpppG-capped RNA to produce m(7)GpppNmp (cap1). Cap1 modification is linked to higher levels of translation. Recognizes a guanosine cap on RNA independent of its N(7) methylation status. In Trypanosoma cruzi (strain CL Brener), this protein is Cap-specific mRNA (nucleoside-2'-O-)-methyltransferase 1.